Consider the following 43-residue polypeptide: Delta-actitoxin-Bca1a (43 aa).

3 disulfide bridges follow: Cys-1–Cys-41, Cys-3–Cys-31, and Cys-24–Cys-42.

It localises to the secreted. Its subcellular location is the nematocyst. Functionally, binds specifically to voltage-gated sodium channels (Nav), thereby delaying their inactivation during signal transduction. Thus it strongly stimulates mammalian cardiac muscle contraction. The sequence is that of Delta-actitoxin-Bca1a from Bunodosoma capense (Knobbly sea anemone).